Reading from the N-terminus, the 518-residue chain is Transcription factor TT8 (518 aa).

Coiled-coil stretches lie at residues E220–E240 and V405–R428. One can recognise a bHLH domain in the interval R359 to L408.

It belongs to the bHLH protein family. Homodimer. Interacts with MYB4, MYB5, MYB6, MYB82, MYB113, MYB114, MYB75/PAP1, MYB90/PAP2, and TT2. As to expression, buds, flowers and developing siliques, but not in leaves, stems and roots.

It is found in the nucleus. In terms of biological role, transcription activator, when associated with MYB75/PAP1 or MYB90/PAP2. Involved in the control of flavonoid pigmentation. Plays a key role in regulating leucoanthocyanidin reductase (BANYULS) and dihydroflavonol-4-reductase (DFR). Not required for leucoanthocyanidin dioxygenase (LDOX) expression. In Arabidopsis thaliana (Mouse-ear cress), this protein is Transcription factor TT8.